Reading from the N-terminus, the 211-residue chain is Metalloproteinase inhibitor 3 (211 aa).

The signal sequence occupies residues 1-23 (MTPWLGLVVLLGSWSLGDWGAEA). A Zn(2+)-binding site is contributed by Cys24. Involved in metalloproteinase-binding regions lie at residues 24–27 (CTCS) and 88–89 (ES). Disulfide bonds link Cys24/Cys91, Cys26/Cys118, Cys36/Cys143, Cys145/Cys192, Cys150/Cys155, and Cys163/Cys184. Residues 24–143 (CTCSPSHPQD…GLNYRYHLGC (120 aa)) form the NTR domain. The mediates interaction with EFEMP1 stretch occupies residues 105–188 (TGRVYDGKMY…SKHYACIRQK (84 aa)). N-linked (GlcNAc...) asparagine glycosylation is present at Asn207.

It belongs to the protease inhibitor I35 (TIMP) family. As to quaternary structure, interacts with EFEMP1. Interacts with KDR.

It localises to the secreted. The protein localises to the extracellular space. It is found in the extracellular matrix. Functionally, mediates a variety of processes including matrix regulation and turnover, inflammation, and angiogenesis, through reversible inhibition of zinc protease superfamily enzymes, primarily matrix metalloproteinases (MMPs). Regulates extracellular matrix (ECM) remodeling through inhibition of matrix metalloproteinases (MMP) including MMP-1, MMP-2, MMP-3, MMP-7, MMP-9, MMP-13, MMP-14 and MMP-15. Additionally, modulates the processing of amyloid precursor protein (APP) and apolipoprotein E receptor ApoER2 by inhibiting two alpha-secretases ADAM10 and ADAM17. Functions as a tumor suppressor and a potent inhibitor of angiogenesis. Exerts its anti-angiogenic effect by directly interacting with vascular endothelial growth factor (VEGF) receptor-2/KDR, preventing its binding to the VEGFA ligand. Selectively induces apoptosis in angiogenic endothelial cells through a caspase-independent cell death pathway. Mechanistically, inhibits matrix-induced focal adhesion kinase PTK2 tyrosine phosphorylation and association with paxillin/PXN and disrupts the incorporation of ITGB3, PTK2 and PXN into focal adhesion contacts on the matrix. This is Metalloproteinase inhibitor 3 (TIMP3) from Equus caballus (Horse).